Reading from the N-terminus, the 336-residue chain is MNHQIHIHDSDIAFPCAPGQSVLDAALQAGIELPYSCRKGSCGNCASALLDGNITSFNGMAVRSELCTSEQVLLCGCTAASDIRIQPSSFRRLDPEARKRFTAKVYSNTLAAPDVSLLRLRLPVGKRAKFEAGQYLLIHLDDGESRSYSMANPPHESDGITLHVRHVPGGRFSTIVQQLKSGDTLEIELPFGSIALKPDDTRPLICVAGGTGFAPIKSVLDDLAKRKVQRDITLIWGARNPSGLYLPSAIDKWRKTWPQFRYIAAITDLGNVPADAHAGRVDDALRTHFGNLHDHVVHCCGSPSLVQSVRTAASDMGLLAQNFHADVFATSPTGSH.

The 89-residue stretch at 3 to 91 (HQIHIHDSDI…DIRIQPSSFR (89 aa)) folds into the 2Fe-2S ferredoxin-type domain. Residues cysteine 37, cysteine 42, cysteine 45, and cysteine 75 each coordinate [2Fe-2S] cluster. In terms of domain architecture, FAD-binding FR-type spans 98 to 197 (RKRFTAKVYS…ELPFGSIALK (100 aa)).

As to quaternary structure, monomer. Part of a multicomponent enzyme system composed of a reductase (TphA1I or TphA1II) and a two-subunit oxygenase component (TphA2I or TphA2II and TphA3I or TphA3II). FAD serves as cofactor. [2Fe-2S] cluster is required as a cofactor.

The catalysed reaction is terephthalate + NADH + O2 + H(+) = (3S,4R)-3,4-dihydroxycyclohexa-1,5-diene-1,4-dicarboxylate + NAD(+). In terms of biological role, component of the terephthalate 1,2-dioxygenase multicomponent enzyme system which catalyzes the dioxygenation of terephthalate (TER/TPA) to 1,2-dihydroxy-3,5-cyclohexadiene-1,4-dicarboxylic acid (DCD). TphA1 probably reduces TphA2A3. It can also use 2,5-dicarboxypyridine (PDC) and 1,4-napthalenedicarboxylic acid (NDC) as substrates, and preferentially uses NADPH which is the physiological electron donor. This is Terephthalate 1,2-dioxygenase, reductase component 1 (tphA1I) from Comamonas sp.